The primary structure comprises 434 residues: Enolase (434 aa).

Residue Gln-167 coordinates (2R)-2-phosphoglycerate. The Proton donor role is filled by Glu-209. 3 residues coordinate Mg(2+): Asp-246, Glu-291, and Asp-318. (2R)-2-phosphoglycerate contacts are provided by Lys-343, Arg-372, Ser-373, and Lys-394. Catalysis depends on Lys-343, which acts as the Proton acceptor.

The protein belongs to the enolase family. In terms of assembly, component of the RNA degradosome, a multiprotein complex involved in RNA processing and mRNA degradation. Mg(2+) serves as cofactor.

It is found in the cytoplasm. The protein resides in the secreted. Its subcellular location is the cell surface. The enzyme catalyses (2R)-2-phosphoglycerate = phosphoenolpyruvate + H2O. It functions in the pathway carbohydrate degradation; glycolysis; pyruvate from D-glyceraldehyde 3-phosphate: step 4/5. Its function is as follows. Catalyzes the reversible conversion of 2-phosphoglycerate (2-PG) into phosphoenolpyruvate (PEP). It is essential for the degradation of carbohydrates via glycolysis. This is Enolase from Buchnera aphidicola subsp. Acyrthosiphon pisum (strain 5A).